The following is a 112-amino-acid chain: Toxin-like structure LSTX-D10 (112 aa).

Positions 1–20 are cleaved as a signal peptide; it reads MMKVLVVVALLVTLISYSSS. A propeptide spanning residues 21–41 is cleaved from the precursor; that stretch reads EGIDDLEADELLSLMANEQTR. 4 cysteine pairs are disulfide-bonded: C45–C60, C52–C69, C59–C84, and C71–C82.

Belongs to the neurotoxin 19 (CSTX) family. 01 subfamily. In terms of tissue distribution, expressed by the venom gland.

Its subcellular location is the secreted. The chain is Toxin-like structure LSTX-D10 from Lycosa singoriensis (Wolf spider).